The sequence spans 878 residues: Aconitate hydratase A (878 aa).

Cysteine 426, cysteine 492, and cysteine 495 together coordinate [4Fe-4S] cluster.

It belongs to the aconitase/IPM isomerase family. Monomer. [4Fe-4S] cluster is required as a cofactor.

The catalysed reaction is citrate = D-threo-isocitrate. It carries out the reaction (2S,3R)-3-hydroxybutane-1,2,3-tricarboxylate = 2-methyl-cis-aconitate + H2O. The protein operates within carbohydrate metabolism; tricarboxylic acid cycle; isocitrate from oxaloacetate: step 2/2. It functions in the pathway organic acid metabolism; propanoate degradation. Its function is as follows. Involved in the catabolism of short chain fatty acids (SCFA) via the tricarboxylic acid (TCA)(acetyl degradation route) and probably the 2-methylcitrate cycle I (propionate degradation route). Catalyzes the reversible isomerization of citrate to isocitrate via cis-aconitate. Could catalyze the hydration of 2-methyl-cis-aconitate to yield (2R,3S)-2-methylisocitrate. The apo form of AcnA functions as a RNA-binding regulatory protein. The chain is Aconitate hydratase A (acnA) from Rickettsia prowazekii (strain Madrid E).